The sequence spans 182 residues: Ribulose bisphosphate carboxylase small subunit, chloroplastic (182 aa).

The transit peptide at 1 to 58 (MACSMISSATVAAVSRASPAQSSMVAPFTCLKSTSAFPVTQKTNNDITSIASNGGRVQ) directs the protein to the chloroplast.

The protein belongs to the RuBisCO small chain family. As to quaternary structure, heterohexadecamer of 8 large and 8 small subunits.

Its subcellular location is the plastid. It localises to the chloroplast. RuBisCO catalyzes two reactions: the carboxylation of D-ribulose 1,5-bisphosphate, the primary event in carbon dioxide fixation, as well as the oxidative fragmentation of the pentose substrate. Both reactions occur simultaneously and in competition at the same active site. Although the small subunit is not catalytic it is essential for maximal activity. The polypeptide is Ribulose bisphosphate carboxylase small subunit, chloroplastic (Betula pendula (European white birch)).